The primary structure comprises 580 residues: Glutamine--tRNA ligase (580 aa).

The 'HIGH' region signature appears at 51 to 61; it reads PEPNGYLHIGH. ATP is bound by residues 52–54 and 58–64; these read EPN and HIGHAKS. L-glutamine is bound by residues Asp84 and Tyr233. ATP is bound by residues Thr252 and 287–288; that span reads RL. Positions 294–298 match the 'KMSKS' region motif; the sequence is ITSKR.

This sequence belongs to the class-I aminoacyl-tRNA synthetase family. As to quaternary structure, monomer.

It is found in the cytoplasm. The catalysed reaction is tRNA(Gln) + L-glutamine + ATP = L-glutaminyl-tRNA(Gln) + AMP + diphosphate. This Ralstonia nicotianae (strain ATCC BAA-1114 / GMI1000) (Ralstonia solanacearum) protein is Glutamine--tRNA ligase.